The following is a 199-amino-acid chain: V-type proton ATPase subunit E (199 aa).

Belongs to the V-ATPase E subunit family.

Its function is as follows. Produces ATP from ADP in the presence of a proton gradient across the membrane. This is V-type proton ATPase subunit E from Clostridium botulinum (strain Okra / Type B1).